The sequence spans 794 residues: DNA ligase (794 aa).

The disordered stretch occupies residues 1 to 47; that stretch reads MEEDLFSLAAGKQPSQQATNETAPRAGEARENAGTDHPGNAEDPAHR. Positions 13 to 22 are enriched in polar residues; that stretch reads QPSQQATNET. Over residues 27–47 the composition is skewed to basic and acidic residues; that stretch reads GEARENAGTDHPGNAEDPAHR. Residues 73-77, 122-123, and Glu-160 each bind NAD(+); these read DAEYD and SI. The N6-AMP-lysine intermediate role is filled by Lys-162. NAD(+) contacts are provided by Arg-183, Glu-219, Lys-335, and Lys-359. Zn(2+) contacts are provided by Cys-457, Cys-460, Cys-475, and Cys-480. Residues 717–794 form the BRCT domain; the sequence is IPAGSLSGKT…EEDFYKMIGN (78 aa).

Belongs to the NAD-dependent DNA ligase family. LigA subfamily. Mg(2+) is required as a cofactor. It depends on Mn(2+) as a cofactor.

The catalysed reaction is NAD(+) + (deoxyribonucleotide)n-3'-hydroxyl + 5'-phospho-(deoxyribonucleotide)m = (deoxyribonucleotide)n+m + AMP + beta-nicotinamide D-nucleotide.. DNA ligase that catalyzes the formation of phosphodiester linkages between 5'-phosphoryl and 3'-hydroxyl groups in double-stranded DNA using NAD as a coenzyme and as the energy source for the reaction. It is essential for DNA replication and repair of damaged DNA. The polypeptide is DNA ligase (Akkermansia muciniphila (strain ATCC BAA-835 / DSM 22959 / JCM 33894 / BCRC 81048 / CCUG 64013 / CIP 107961 / Muc)).